Reading from the N-terminus, the 744-residue chain is Vesicle-fusing ATPase (744 aa).

K105 is subject to N6-acetyllysine. Phosphoserine is present on S207. Residue Y259 is modified to Phosphotyrosine. ATP contacts are provided by residues 505 to 510 (NGIIKW) and 545 to 552 (PHSGKTAL). Residue T550 coordinates Mg(2+). Residue S569 is modified to Phosphoserine; by CDK16.

It belongs to the AAA ATPase family. In terms of assembly, homohexamer. Interacts with GABARAP and GABARAPL2. Interacts with GRIA2. Interacts with PLK2, leading to disrupt the interaction with GRIA2. Interacts with MUSK; may regulate MUSK endocytosis and activity. Interacts with CDK16. Requires Mg(2+) as cofactor. In terms of processing, phosphorylation at Ser-569 interferes with homohexamerization. In terms of tissue distribution, detected in brain (at protein level).

The protein localises to the cytoplasm. It catalyses the reaction ATP + H2O = ADP + phosphate + H(+). In terms of biological role, required for vesicle-mediated transport. Catalyzes the fusion of transport vesicles within the Golgi cisternae. Is also required for transport from the endoplasmic reticulum to the Golgi stack. Seems to function as a fusion protein required for the delivery of cargo proteins to all compartments of the Golgi stack independent of vesicle origin. Interaction with AMPAR subunit GRIA2 leads to influence GRIA2 membrane cycling. The protein is Vesicle-fusing ATPase (Nsf) of Rattus norvegicus (Rat).